Here is a 95-residue protein sequence, read N- to C-terminus: Aspartyl/glutamyl-tRNA(Asn/Gln) amidotransferase subunit C (95 aa).

Belongs to the GatC family. As to quaternary structure, heterotrimer of A, B and C subunits.

The catalysed reaction is L-glutamyl-tRNA(Gln) + L-glutamine + ATP + H2O = L-glutaminyl-tRNA(Gln) + L-glutamate + ADP + phosphate + H(+). It catalyses the reaction L-aspartyl-tRNA(Asn) + L-glutamine + ATP + H2O = L-asparaginyl-tRNA(Asn) + L-glutamate + ADP + phosphate + 2 H(+). In terms of biological role, allows the formation of correctly charged Asn-tRNA(Asn) or Gln-tRNA(Gln) through the transamidation of misacylated Asp-tRNA(Asn) or Glu-tRNA(Gln) in organisms which lack either or both of asparaginyl-tRNA or glutaminyl-tRNA synthetases. The reaction takes place in the presence of glutamine and ATP through an activated phospho-Asp-tRNA(Asn) or phospho-Glu-tRNA(Gln). The protein is Aspartyl/glutamyl-tRNA(Asn/Gln) amidotransferase subunit C of Nitrobacter hamburgensis (strain DSM 10229 / NCIMB 13809 / X14).